The primary structure comprises 157 residues: Cysteine protease Nivulian-2 (157 aa).

Belongs to the intron maturase 2 family. MatK subfamily. As to quaternary structure, monomer. Glycosylated. As to expression, accumulates in latex (at protein level).

Inhibited by HgCl(2), iodoacetamide (IAA) and, to a far lesser extent, by SDS, hydrogen peroxide H(1)O(2), KCl, NaCl, ZnCl(2), AgSO(4), CdCl(2), FeCl(3), PMSF, Pepstatin A and EDTA. Repressed moderately by many organic solvents such as diethyl ether, ethy lacetate, acetophenone, butanol, trichloroethylene, tetrahydrofuran, methanol, chloroform and dichloromethane, and, to a lesser extent, by propanol, benzyl alcohol and chlorobenzene. Its function is as follows. Cysteine protease inducing milk clotting by cleaving casein. Exhibits biomedical activities such as wound healing, haemostatic and antibacterial activity, as well as agricultural application in biocontrol process against the infectious management of the root knot nematode Meloidogyne incognita. The chain is Cysteine protease Nivulian-2 from Euphorbia nivulia (Leafy milk hedge).